A 1403-amino-acid polypeptide reads, in one-letter code: DNA-directed RNA polymerase subunit beta' (1403 aa).

Zn(2+) contacts are provided by cysteine 71, cysteine 73, cysteine 86, and cysteine 89. Aspartate 462, aspartate 464, and aspartate 466 together coordinate Mg(2+). Cysteine 820, cysteine 893, cysteine 900, and cysteine 903 together coordinate Zn(2+).

It belongs to the RNA polymerase beta' chain family. As to quaternary structure, the RNAP catalytic core consists of 2 alpha, 1 beta, 1 beta' and 1 omega subunit. When a sigma factor is associated with the core the holoenzyme is formed, which can initiate transcription. Mg(2+) is required as a cofactor. The cofactor is Zn(2+).

The catalysed reaction is RNA(n) + a ribonucleoside 5'-triphosphate = RNA(n+1) + diphosphate. In terms of biological role, DNA-dependent RNA polymerase catalyzes the transcription of DNA into RNA using the four ribonucleoside triphosphates as substrates. In Methylobacterium radiotolerans (strain ATCC 27329 / DSM 1819 / JCM 2831 / NBRC 15690 / NCIMB 10815 / 0-1), this protein is DNA-directed RNA polymerase subunit beta'.